We begin with the raw amino-acid sequence, 202 residues long: Small ribosomal subunit protein uS4c (202 aa).

Positions 90 to 152 constitute an S4 RNA-binding domain; that stretch reads MRLDNVIFRL…RKSESIINKN (63 aa).

Belongs to the universal ribosomal protein uS4 family. Part of the 30S ribosomal subunit. Contacts protein S5. The interaction surface between S4 and S5 is involved in control of translational fidelity.

Its subcellular location is the plastid. The protein localises to the chloroplast. One of the primary rRNA binding proteins, it binds directly to 16S rRNA where it nucleates assembly of the body of the 30S subunit. In terms of biological role, with S5 and S12 plays an important role in translational accuracy. This Dendrohypopterygium filiculiforme (Moss) protein is Small ribosomal subunit protein uS4c (rps4).